The following is a 790-amino-acid chain: uncharacterized protein (790 aa).

The region spanning 37–172 is the TBDR plug domain; that stretch reads APVPVPVNGN…NGGVIDAKIK (136 aa). The region spanning 178–790 is the TBDR beta-barrel domain; sequence DSKVKLGYRT…TFWLDVSMKF (613 aa).

Belongs to the TonB-dependent receptor family.

It is found in the cell outer membrane. This is an uncharacterized protein from Escherichia coli (strain K12).